Reading from the N-terminus, the 291-residue chain is Secretory carrier-associated membrane protein 5 (291 aa).

The span at 1–10 (MGGRYDRNTF) shows a compositional bias: basic and acidic residues. A disordered region spans residues 1-66 (MGGRYDRNTF…GSGAQDLKKK (66 aa)). Over 1 to 126 (MGGRYDRNTF…EILVRLQRLQ (126 aa)) the chain is Cytoplasmic. At S34 the chain carries Phosphoserine. Residues 58–94 (SGAQDLKKKEKELQAKEADLRRREQDLKRKQDAAARA) are a coiled coil. 4 helical membrane passes run 127 to 147 (YIAFATYLGLVLALFWNIIAV), 159 to 179 (IWLLAVIYFISGVPGGYVLWY), 194 to 214 (FGWFFLFYMLHILFCLFAAVA), and 242 to 262 (IFYFIGFGLFCLESVVSIWVI). The Cytoplasmic segment spans residues 263 to 288 (QQVYMYFRGSGKADDMRRDAARGAMR).

Belongs to the SCAMP family.

The protein localises to the cell membrane. Its subcellular location is the cytoplasmic vesicle. The protein resides in the secretory vesicle membrane. In terms of biological role, probably involved in membrane trafficking. This chain is Secretory carrier-associated membrane protein 5 (SCAMP5), found in Arabidopsis thaliana (Mouse-ear cress).